A 38-amino-acid polypeptide reads, in one-letter code: Mating hormone A-factor 2 (38 aa).

The segment covering 1–12 (MQPITTASTQAT) has biased composition (polar residues). The tract at residues 1 to 20 (MQPITTASTQATQKDKSSEK) is disordered. A propeptide spanning residues 1-23 (MQPITTASTQATQKDKSSEKKDN) is cleaved from the precursor. Cysteine methyl ester is present on cysteine 35. Residue cysteine 35 is the site of S-farnesyl cysteine attachment. The propeptide at 36 to 38 (VIA) is removed in mature form.

Its subcellular location is the cell membrane. Its function is as follows. The active factor is excreted into the culture medium by haploid cells of the A mating type and acts on cells of the opposite mating type (type alpha). It mediates the conjugation process between the two types by inhibiting the initiation of DNA synthesis in type alpha cells and synchronizing them with type A. This is Mating hormone A-factor 2 (MFA2) from Saccharomyces cerevisiae (strain ATCC 204508 / S288c) (Baker's yeast).